The sequence spans 236 residues: LexA repressor (236 aa).

A disordered region spans residues 1-25 (MNDSNDTSVAGGAAGADSRVLSADS). The H-T-H motif DNA-binding region spans 51–71 (IREIGDAVGLTSTSSVAHQLR). Residues S160 and K197 each act as for autocatalytic cleavage activity in the active site.

Belongs to the peptidase S24 family. As to quaternary structure, homodimer.

It carries out the reaction Hydrolysis of Ala-|-Gly bond in repressor LexA.. In terms of biological role, represses a number of genes involved in the response to DNA damage (SOS response), including recA and lexA. In the presence of single-stranded DNA, RecA interacts with LexA causing an autocatalytic cleavage which disrupts the DNA-binding part of LexA, leading to derepression of the SOS regulon and eventually DNA repair. This chain is LexA repressor, found in Mycobacterium bovis (strain BCG / Pasteur 1173P2).